The primary structure comprises 338 residues: Anthranilate phosphoribosyltransferase (338 aa).

5-phospho-alpha-D-ribose 1-diphosphate contacts are provided by residues Gly-81, 84–85 (GD), Ser-89, 91–94 (NVST), 109–117 (KHGNRALSS), and Ala-121. Residue Gly-81 coordinates anthranilate. Position 93 (Ser-93) interacts with Mg(2+). Anthranilate is bound at residue Asn-112. Position 167 (Arg-167) interacts with anthranilate. Residues Asp-226 and Glu-227 each coordinate Mg(2+).

The protein belongs to the anthranilate phosphoribosyltransferase family. Homodimer. Mg(2+) is required as a cofactor.

The enzyme catalyses N-(5-phospho-beta-D-ribosyl)anthranilate + diphosphate = 5-phospho-alpha-D-ribose 1-diphosphate + anthranilate. The protein operates within amino-acid biosynthesis; L-tryptophan biosynthesis; L-tryptophan from chorismate: step 2/5. In terms of biological role, catalyzes the transfer of the phosphoribosyl group of 5-phosphorylribose-1-pyrophosphate (PRPP) to anthranilate to yield N-(5'-phosphoribosyl)-anthranilate (PRA). This Rhodopseudomonas palustris (strain BisB5) protein is Anthranilate phosphoribosyltransferase.